Here is a 174-residue protein sequence, read N- to C-terminus: NADH-ubiquinone oxidoreductase chain 6 (174 aa).

A run of 6 helical transmembrane segments spans residues 1–21 (MTYA…GFSS), 24–44 (SPIY…AVIL), 47–67 (GGGY…MVVF), 86–106 (VEVL…VLWV), 111–131 (GVVV…EGEG), and 151–171 (WLVV…IEIA).

This sequence belongs to the complex I subunit 6 family. Core subunit of respiratory chain NADH dehydrogenase (Complex I) which is composed of 45 different subunits.

It localises to the mitochondrion inner membrane. It carries out the reaction a ubiquinone + NADH + 5 H(+)(in) = a ubiquinol + NAD(+) + 4 H(+)(out). In terms of biological role, core subunit of the mitochondrial membrane respiratory chain NADH dehydrogenase (Complex I) which catalyzes electron transfer from NADH through the respiratory chain, using ubiquinone as an electron acceptor. Essential for the catalytic activity and assembly of complex I. This Pongo abelii (Sumatran orangutan) protein is NADH-ubiquinone oxidoreductase chain 6 (MT-ND6).